We begin with the raw amino-acid sequence, 75 residues long: MKFQMIAAVLLIAFCLSVVVTARMELQDDEEMKNGSFQKRRTCIDTIPKSRCTAFQCKHSMKYRLSFCRKTCGTC.

Residues 1–22 form the signal peptide; the sequence is MKFQMIAAVLLIAFCLSVVVTA. A propeptide spanning residues 23–40 is cleaved from the precursor; that stretch reads RMELQDDEEMKNGSFQKR. Residues 43 to 75 enclose the ShKT domain; sequence CIDTIPKSRCTAFQCKHSMKYRLSFCRKTCGTC. 3 disulfide bridges follow: C43–C75, C52–C68, and C57–C72.

It belongs to the sea anemone type 1 potassium channel toxin family. Type 1a subfamily.

The protein localises to the secreted. The protein resides in the nematocyst. Inhibits voltage-gated potassium channels (Kv) with higher potency for Kv1.1/KCNA1 and Kv1.3/KCNA3 (IC(50)=3.4 nM). The protein is Kappa-thalatoxin-Tas2a of Thalassianthus aster (Fuzzy-tipped anemone).